We begin with the raw amino-acid sequence, 280 residues long: Bifunctional protein FolD (280 aa).

Residues 161 to 163 (GRS), serine 186, and isoleucine 227 contribute to the NADP(+) site.

This sequence belongs to the tetrahydrofolate dehydrogenase/cyclohydrolase family. Homodimer.

It catalyses the reaction (6R)-5,10-methylene-5,6,7,8-tetrahydrofolate + NADP(+) = (6R)-5,10-methenyltetrahydrofolate + NADPH. The catalysed reaction is (6R)-5,10-methenyltetrahydrofolate + H2O = (6R)-10-formyltetrahydrofolate + H(+). It participates in one-carbon metabolism; tetrahydrofolate interconversion. In terms of biological role, catalyzes the oxidation of 5,10-methylenetetrahydrofolate to 5,10-methenyltetrahydrofolate and then the hydrolysis of 5,10-methenyltetrahydrofolate to 10-formyltetrahydrofolate. The sequence is that of Bifunctional protein FolD from Caldanaerobacter subterraneus subsp. tengcongensis (strain DSM 15242 / JCM 11007 / NBRC 100824 / MB4) (Thermoanaerobacter tengcongensis).